Consider the following 832-residue polypeptide: MILQAHLHSLCLLMLYLATGYGQEGKFSGPLKPMTFSIYEGQEPSQIIFQFKANPPAVTFELTGETDNIFVIEREGLLYYNRALDRETRSTHNLQVAALDANGIIVEGPVPITIKVKDINDNRPTFLQSKYEGSVRQNSRPGKPFLYVNATDLDDPATPNGQLYYQIVIQLPMINNVMYFQINNKTGAISLTREGSQELNPAKNPSYNLVISVKDMGGQSENSFSDTTSVDIIVTENIWKAPKPVEMVENSTDPHPIKITQVRWNDPGAQYSLVDKEKLPRFPFSIDQEGDIYVTQPLDREEKDAYVFYAVAKDEYGKPLSYPLEIHVKVKDINDNPPTCPSPVTVFEVQENERLGNSIGTLTAHDRDEENTANSFLNYRIVEQTPKLPMDGLFLIQTYAGMLQLAKQSLKKQDTPQYNLTIEVSDKDFKTLCFVQINVIDINDQIPIFEKSDYGNLTLAEDTNIGSTILTIQATDADEPFTGSSKILYHIIKGDSEGRLGVDTDPHTNTGYVIIKKPLDFETAAVSNIVFKAENPEPLVFGVKYNASSFAKFTLIVTDVNEAPQFSQHVFQAKVSEDVAIGTKVGNVTAKDPEGLDISYSLRGDTRGWLKIDHVTGEIFSVAPLDREAGSPYRVQVVATEVGGSSLSSVSEFHLILMDVNDNPPRLAKDYTGLFFCHPLSAPGSLIFEATDDDQHLFRGPHFTFSLGSGSLQNDWEVSKINGTHARLSTRHTEFEEREYVVLIRINDGGRPPLEGIVSLPVTFCSCVEGSCFRPAGHQTGIPTVGMAVGILLTTLLVIGIILAVVFIRIKKDKGKDNVESAQASEVKPLRS.

The first 22 residues, 1–22 (MILQAHLHSLCLLMLYLATGYG), serve as a signal peptide directing secretion. Residues 23–787 (QEGKFSGPLK…HQTGIPTVGM (765 aa)) lie on the Extracellular side of the membrane. 7 consecutive Cadherin domains span residues 30–128 (PLKP…TFLQ), 129–244 (SKYE…APKP), 245–340 (VEMV…PPTC), 341–449 (PSPV…IPIF), 450–566 (EKSD…APQF), 567–667 (SQHV…PPRL), and 668–777 (AKDY…RPAG). N-linked (GlcNAc...) asparagine glycosylation is found at Asn-149, Asn-184, Asn-250, Asn-419, Asn-456, Asn-546, Asn-587, and Asn-722. A helical transmembrane segment spans residues 788–808 (AVGILLTTLLVIGIILAVVFI). The Cytoplasmic segment spans residues 809 to 832 (RIKKDKGKDNVESAQASEVKPLRS).

As to expression, expressed in the gastrointestinal tract and pancreatic duct. Not detected in kidney, lung, liver, brain, adrenal gland and skin.

It localises to the cell membrane. In terms of biological role, cadherins are calcium-dependent cell adhesion proteins. They preferentially interact with themselves in a homophilic manner in connecting cells; cadherins may thus contribute to the sorting of heterogeneous cell types. LI-cadherin may have a role in the morphological organization of liver and intestine. Involved in intestinal peptide transport. This is Cadherin-17 (CDH17) from Homo sapiens (Human).